A 479-amino-acid chain; its full sequence is UDP-N-acetylmuramate--L-alanine ligase (479 aa).

126 to 132 is a binding site for ATP; sequence GTHGKTT.

It belongs to the MurCDEF family.

Its subcellular location is the cytoplasm. It carries out the reaction UDP-N-acetyl-alpha-D-muramate + L-alanine + ATP = UDP-N-acetyl-alpha-D-muramoyl-L-alanine + ADP + phosphate + H(+). It functions in the pathway cell wall biogenesis; peptidoglycan biosynthesis. Cell wall formation. In Alkalilimnicola ehrlichii (strain ATCC BAA-1101 / DSM 17681 / MLHE-1), this protein is UDP-N-acetylmuramate--L-alanine ligase.